We begin with the raw amino-acid sequence, 77 residues long: Large ribosomal subunit protein eL20 (77 aa).

Belongs to the eukaryotic ribosomal protein eL20 family. Part of the 50S ribosomal subunit. Binds 23S rRNA.

The polypeptide is Large ribosomal subunit protein eL20 (Pyrococcus abyssi (strain GE5 / Orsay)).